The chain runs to 504 residues: Lysine--tRNA ligase (504 aa).

Residues glutamate 411 and glutamate 418 each contribute to the Mg(2+) site.

It belongs to the class-II aminoacyl-tRNA synthetase family. As to quaternary structure, homodimer. It depends on Mg(2+) as a cofactor.

The protein localises to the cytoplasm. It catalyses the reaction tRNA(Lys) + L-lysine + ATP = L-lysyl-tRNA(Lys) + AMP + diphosphate. The protein is Lysine--tRNA ligase of Clostridium botulinum (strain ATCC 19397 / Type A).